We begin with the raw amino-acid sequence, 227 residues long: MSLREICSQELVEFKGNKRGIIVNIKREAPFEEIQEKIINKLEAYVGFFNGAKISKINSDCLTDMEILELKEGITSRFDVEFVEDQKIEENSNFPTKYVNTLRSGENIEFEGDVVILNDMKPGSKVLSKSNTVVMGDINAGAKVVAGGNVFVMGKIEGFVHAGAEGNEFAYVVAGNLNPKILQIADNIAEAPDDEENYESESEISPEIAFVSNGRIVIESYLSKLDK.

This sequence belongs to the MinC family. As to quaternary structure, interacts with MinD and FtsZ.

Functionally, cell division inhibitor that blocks the formation of polar Z ring septums. Rapidly oscillates between the poles of the cell to destabilize FtsZ filaments that have formed before they mature into polar Z rings. Prevents FtsZ polymerization. The chain is Probable septum site-determining protein MinC from Clostridioides difficile (strain 630) (Peptoclostridium difficile).